A 172-amino-acid polypeptide reads, in one-letter code: Putative phosphoesterase BC_1225 (172 aa).

The Proton donor role is filled by His34. Short sequence motifs (HXTX) lie at residues 34-37 and 115-118; these read HITL and HLTI. The Proton acceptor role is filled by His115.

This sequence belongs to the 2H phosphoesterase superfamily. YjcG family.

This Bacillus cereus (strain ATCC 14579 / DSM 31 / CCUG 7414 / JCM 2152 / NBRC 15305 / NCIMB 9373 / NCTC 2599 / NRRL B-3711) protein is Putative phosphoesterase BC_1225.